Here is a 282-residue protein sequence, read N- to C-terminus: Biotin synthase (282 aa).

The 228-residue stretch at 1–228 (MQEIFLCSIS…NARLMVAGGR (228 aa)) folds into the Radical SAM core domain. 3 residues coordinate [4Fe-4S] cluster: cysteine 17, cysteine 21, and cysteine 24. Residues cysteine 61, cysteine 96, cysteine 154, and arginine 221 each contribute to the [2Fe-2S] cluster site.

This sequence belongs to the radical SAM superfamily. Biotin synthase family. Homodimer. [4Fe-4S] cluster is required as a cofactor. [2Fe-2S] cluster serves as cofactor.

It carries out the reaction (4R,5S)-dethiobiotin + (sulfur carrier)-SH + 2 reduced [2Fe-2S]-[ferredoxin] + 2 S-adenosyl-L-methionine = (sulfur carrier)-H + biotin + 2 5'-deoxyadenosine + 2 L-methionine + 2 oxidized [2Fe-2S]-[ferredoxin]. It functions in the pathway cofactor biosynthesis; biotin biosynthesis; biotin from 7,8-diaminononanoate: step 2/2. In terms of biological role, catalyzes the conversion of dethiobiotin (DTB) to biotin by the insertion of a sulfur atom into dethiobiotin via a radical-based mechanism. The sequence is that of Biotin synthase from Helicobacter pylori (strain P12).